We begin with the raw amino-acid sequence, 458 residues long: Argininosuccinate lyase (458 aa).

It belongs to the lyase 1 family. Argininosuccinate lyase subfamily.

It is found in the cytoplasm. The enzyme catalyses 2-(N(omega)-L-arginino)succinate = fumarate + L-arginine. Its pathway is amino-acid biosynthesis; L-arginine biosynthesis; L-arginine from L-ornithine and carbamoyl phosphate: step 3/3. The sequence is that of Argininosuccinate lyase from Geobacter sulfurreducens (strain ATCC 51573 / DSM 12127 / PCA).